The chain runs to 300 residues: N-acetylmannosamine kinase (300 aa).

ATP-binding positions include 5 to 12 and 132 to 139; these read ALDIGGTK and GVGGGIVL. Positions 156, 166, 168, and 173 each coordinate Zn(2+).

This sequence belongs to the ROK (NagC/XylR) family. NanK subfamily. As to quaternary structure, homodimer.

It carries out the reaction an N-acyl-D-mannosamine + ATP = an N-acyl-D-mannosamine 6-phosphate + ADP + H(+). It participates in amino-sugar metabolism; N-acetylneuraminate degradation; D-fructose 6-phosphate from N-acetylneuraminate: step 2/5. In terms of biological role, catalyzes the phosphorylation of N-acetylmannosamine (ManNAc) to ManNAc-6-P. The protein is N-acetylmannosamine kinase of Haemophilus influenzae (strain 86-028NP).